The following is a 139-amino-acid chain: FAD synthase (139 aa).

ATP-binding positions include 9–10, 14–17, and D92; these read TF and HPGH.

The protein belongs to the archaeal FAD synthase family. In terms of assembly, homodimer. Requires a divalent metal cation as cofactor.

The catalysed reaction is FMN + ATP + H(+) = FAD + diphosphate. Its pathway is cofactor biosynthesis; FAD biosynthesis; FAD from FMN: step 1/1. In terms of biological role, catalyzes the transfer of the AMP portion of ATP to flavin mononucleotide (FMN) to produce flavin adenine dinucleotide (FAD) coenzyme. This is FAD synthase from Methanosarcina barkeri (strain Fusaro / DSM 804).